Reading from the N-terminus, the 88-residue chain is Large ribosomal subunit protein bL27 (88 aa).

The disordered stretch occupies residues 1 to 21; it reads MAHKKGVGSSRNGRDSQPKML.

It belongs to the bacterial ribosomal protein bL27 family.

In Pelotomaculum thermopropionicum (strain DSM 13744 / JCM 10971 / SI), this protein is Large ribosomal subunit protein bL27.